The primary structure comprises 375 residues: Queuine tRNA-ribosyltransferase (375 aa).

Asp89 (proton acceptor) is an active-site residue. Residues 89–93 (DSGGF), Asp143, Gln187, and Gly214 each bind substrate. Residues 245–251 (GVGKPED) are RNA binding. Asp264 (nucleophile) is an active-site residue. An RNA binding; important for wobble base 34 recognition region spans residues 269 to 273 (TRNAR). Cys302, Cys304, Cys307, and His333 together coordinate Zn(2+).

The protein belongs to the queuine tRNA-ribosyltransferase family. Homodimer. Within each dimer, one monomer is responsible for RNA recognition and catalysis, while the other monomer binds to the replacement base PreQ1. Requires Zn(2+) as cofactor.

The catalysed reaction is 7-aminomethyl-7-carbaguanine + guanosine(34) in tRNA = 7-aminomethyl-7-carbaguanosine(34) in tRNA + guanine. The protein operates within tRNA modification; tRNA-queuosine biosynthesis. Functionally, catalyzes the base-exchange of a guanine (G) residue with the queuine precursor 7-aminomethyl-7-deazaguanine (PreQ1) at position 34 (anticodon wobble position) in tRNAs with GU(N) anticodons (tRNA-Asp, -Asn, -His and -Tyr). Catalysis occurs through a double-displacement mechanism. The nucleophile active site attacks the C1' of nucleotide 34 to detach the guanine base from the RNA, forming a covalent enzyme-RNA intermediate. The proton acceptor active site deprotonates the incoming PreQ1, allowing a nucleophilic attack on the C1' of the ribose to form the product. After dissociation, two additional enzymatic reactions on the tRNA convert PreQ1 to queuine (Q), resulting in the hypermodified nucleoside queuosine (7-(((4,5-cis-dihydroxy-2-cyclopenten-1-yl)amino)methyl)-7-deazaguanosine). The protein is Queuine tRNA-ribosyltransferase of Klebsiella pneumoniae subsp. pneumoniae (strain ATCC 700721 / MGH 78578).